Here is a 372-residue protein sequence, read N- to C-terminus: 4-hydroxy-3-methylbut-2-en-1-yl diphosphate synthase (flavodoxin) (372 aa).

[4Fe-4S] cluster is bound by residues C270, C273, C305, and E312.

Belongs to the IspG family. [4Fe-4S] cluster serves as cofactor.

The enzyme catalyses (2E)-4-hydroxy-3-methylbut-2-enyl diphosphate + oxidized [flavodoxin] + H2O + 2 H(+) = 2-C-methyl-D-erythritol 2,4-cyclic diphosphate + reduced [flavodoxin]. Its pathway is isoprenoid biosynthesis; isopentenyl diphosphate biosynthesis via DXP pathway; isopentenyl diphosphate from 1-deoxy-D-xylulose 5-phosphate: step 5/6. Functionally, converts 2C-methyl-D-erythritol 2,4-cyclodiphosphate (ME-2,4cPP) into 1-hydroxy-2-methyl-2-(E)-butenyl 4-diphosphate. In Salmonella typhi, this protein is 4-hydroxy-3-methylbut-2-en-1-yl diphosphate synthase (flavodoxin).